The following is a 262-amino-acid chain: Thiazole synthase (262 aa).

Lys97 (schiff-base intermediate with DXP) is an active-site residue. 1-deoxy-D-xylulose 5-phosphate-binding positions include Gly158, 185-186 (AG), and 207-208 (NT).

It belongs to the ThiG family. As to quaternary structure, homotetramer. Forms heterodimers with either ThiH or ThiS.

The protein localises to the cytoplasm. It catalyses the reaction [ThiS sulfur-carrier protein]-C-terminal-Gly-aminoethanethioate + 2-iminoacetate + 1-deoxy-D-xylulose 5-phosphate = [ThiS sulfur-carrier protein]-C-terminal Gly-Gly + 2-[(2R,5Z)-2-carboxy-4-methylthiazol-5(2H)-ylidene]ethyl phosphate + 2 H2O + H(+). Its pathway is cofactor biosynthesis; thiamine diphosphate biosynthesis. Functionally, catalyzes the rearrangement of 1-deoxy-D-xylulose 5-phosphate (DXP) to produce the thiazole phosphate moiety of thiamine. Sulfur is provided by the thiocarboxylate moiety of the carrier protein ThiS. In vitro, sulfur can be provided by H(2)S. The polypeptide is Thiazole synthase (Neisseria gonorrhoeae (strain ATCC 700825 / FA 1090)).